Consider the following 244-residue polypeptide: Ubiquinone biosynthesis O-methyltransferase (244 aa).

Arginine 36, glycine 60, aspartate 81, and leucine 123 together coordinate S-adenosyl-L-methionine.

Belongs to the methyltransferase superfamily. UbiG/COQ3 family.

The enzyme catalyses a 3-demethylubiquinol + S-adenosyl-L-methionine = a ubiquinol + S-adenosyl-L-homocysteine + H(+). It carries out the reaction a 3-(all-trans-polyprenyl)benzene-1,2-diol + S-adenosyl-L-methionine = a 2-methoxy-6-(all-trans-polyprenyl)phenol + S-adenosyl-L-homocysteine + H(+). It functions in the pathway cofactor biosynthesis; ubiquinone biosynthesis. O-methyltransferase that catalyzes the 2 O-methylation steps in the ubiquinone biosynthetic pathway. This is Ubiquinone biosynthesis O-methyltransferase from Rickettsia felis (strain ATCC VR-1525 / URRWXCal2) (Rickettsia azadi).